The chain runs to 1375 residues: ARF guanine-nucleotide exchange factor GNL2 (1375 aa).

The region spanning 486-676 (HIRVRKAQKR…SELFQSIATN (191 aa)) is the SEC7 domain. Glu-590 is an active-site residue.

Homodimer. As to expression, preferentially expressed in mature pollen grains and growing pollen tubes.

The protein resides in the cytoplasm. It is found in the cytosol. The protein localises to the membrane. In terms of biological role, activates the ARF proteins by exchanging bound GDP for free GTP. Plays a role in vesicular protein sorting. Essential for pollen germination. This chain is ARF guanine-nucleotide exchange factor GNL2 (GNL2), found in Arabidopsis thaliana (Mouse-ear cress).